A 331-amino-acid polypeptide reads, in one-letter code: Ornithine carbamoyltransferase (331 aa).

Residues 57 to 60, glutamine 82, arginine 106, and 133 to 136 each bind carbamoyl phosphate; these read STRT and HPTQ. Residues asparagine 166, aspartate 230, and 234–235 contribute to the L-ornithine site; that span reads SM. Carbamoyl phosphate is bound by residues 272-273 and arginine 317; that span reads CL.

Belongs to the aspartate/ornithine carbamoyltransferase superfamily. OTCase family.

It is found in the cytoplasm. It catalyses the reaction carbamoyl phosphate + L-ornithine = L-citrulline + phosphate + H(+). It functions in the pathway amino-acid degradation; L-arginine degradation via ADI pathway; carbamoyl phosphate from L-arginine: step 2/2. Functionally, reversibly catalyzes the transfer of the carbamoyl group from carbamoyl phosphate (CP) to the N(epsilon) atom of ornithine (ORN) to produce L-citrulline. The sequence is that of Ornithine carbamoyltransferase from Clostridium perfringens (strain SM101 / Type A).